The following is a 119-amino-acid chain: Small ribosomal subunit protein bS6 (119 aa).

Positions 99–119 (KKEKKQSRKEEGSENSEKVEE) are disordered.

The protein belongs to the bacterial ribosomal protein bS6 family.

In terms of biological role, binds together with bS18 to 16S ribosomal RNA. The protein is Small ribosomal subunit protein bS6 of Thermosipho melanesiensis (strain DSM 12029 / CIP 104789 / BI429).